Consider the following 436-residue polypeptide: 3-ketoacyl-CoA thiolase (436 aa).

Residue cysteine 99 is the Acyl-thioester intermediate of the active site. Residues histidine 392 and cysteine 422 each act as proton acceptor in the active site.

The protein belongs to the thiolase-like superfamily. Thiolase family. Heterotetramer of two alpha chains (FadJ) and two beta chains (FadI).

It is found in the cytoplasm. The enzyme catalyses an acyl-CoA + acetyl-CoA = a 3-oxoacyl-CoA + CoA. The protein operates within lipid metabolism; fatty acid beta-oxidation. Its function is as follows. Catalyzes the final step of fatty acid oxidation in which acetyl-CoA is released and the CoA ester of a fatty acid two carbons shorter is formed. The chain is 3-ketoacyl-CoA thiolase from Salmonella paratyphi A (strain AKU_12601).